Reading from the N-terminus, the 394-residue chain is LL-diaminopimelate aminotransferase (394 aa).

Substrate contacts are provided by tyrosine 14 and glycine 41. Pyridoxal 5'-phosphate-binding positions include tyrosine 71, 104–105 (AK), tyrosine 128, asparagine 174, tyrosine 205, and 233–235 (SFS). Substrate is bound by residues lysine 105, tyrosine 128, and asparagine 174. N6-(pyridoxal phosphate)lysine is present on lysine 236. Pyridoxal 5'-phosphate-binding residues include arginine 244 and asparagine 275. Residues asparagine 275 and arginine 369 each contribute to the substrate site.

It belongs to the class-I pyridoxal-phosphate-dependent aminotransferase family. LL-diaminopimelate aminotransferase subfamily. Homodimer. Requires pyridoxal 5'-phosphate as cofactor.

It catalyses the reaction (2S,6S)-2,6-diaminopimelate + 2-oxoglutarate = (S)-2,3,4,5-tetrahydrodipicolinate + L-glutamate + H2O + H(+). It participates in amino-acid biosynthesis; L-lysine biosynthesis via DAP pathway; LL-2,6-diaminopimelate from (S)-tetrahydrodipicolinate (aminotransferase route): step 1/1. Its function is as follows. Involved in the synthesis of meso-diaminopimelate (m-DAP or DL-DAP), required for both lysine and peptidoglycan biosynthesis. Catalyzes the direct conversion of tetrahydrodipicolinate to LL-diaminopimelate. The polypeptide is LL-diaminopimelate aminotransferase (Chlamydia trachomatis serovar L2b (strain UCH-1/proctitis)).